The primary structure comprises 90 residues: YcgL domain-containing protein YE2368 (90 aa).

In terms of domain architecture, YcgL spans 1–85 (MLCAIYRSPK…PPESLLKMHL (85 aa)).

The protein is YcgL domain-containing protein YE2368 of Yersinia enterocolitica serotype O:8 / biotype 1B (strain NCTC 13174 / 8081).